A 551-amino-acid chain; its full sequence is UvrABC system protein C (551 aa).

One can recognise a GIY-YIG domain in the interval 12–87; the sequence is EKPGVYIFKN…IFKHKPKYNI (76 aa). The UVR domain maps to 193-228; it reads EFVKDYIEQKMNYHSKMLDFENAAKYRDLLLSFEKL.

Belongs to the UvrC family. In terms of assembly, interacts with UvrB in an incision complex.

It localises to the cytoplasm. Its function is as follows. The UvrABC repair system catalyzes the recognition and processing of DNA lesions. UvrC both incises the 5' and 3' sides of the lesion. The N-terminal half is responsible for the 3' incision and the C-terminal half is responsible for the 5' incision. The protein is UvrABC system protein C of Thermosipho africanus (strain TCF52B).